We begin with the raw amino-acid sequence, 428 residues long: Serine--tRNA ligase (428 aa).

235-237 (TAE) is a binding site for L-serine. ATP is bound at residue 266-268 (RYE). Residue E289 coordinates L-serine. ATP is bound at residue 353 to 356 (EVSS). L-serine is bound at residue S389.

It belongs to the class-II aminoacyl-tRNA synthetase family. Type-1 seryl-tRNA synthetase subfamily. In terms of assembly, homodimer. The tRNA molecule binds across the dimer.

It is found in the cytoplasm. It carries out the reaction tRNA(Ser) + L-serine + ATP = L-seryl-tRNA(Ser) + AMP + diphosphate + H(+). It catalyses the reaction tRNA(Sec) + L-serine + ATP = L-seryl-tRNA(Sec) + AMP + diphosphate + H(+). The protein operates within aminoacyl-tRNA biosynthesis; selenocysteinyl-tRNA(Sec) biosynthesis; L-seryl-tRNA(Sec) from L-serine and tRNA(Sec): step 1/1. Its function is as follows. Catalyzes the attachment of serine to tRNA(Ser). Is also able to aminoacylate tRNA(Sec) with serine, to form the misacylated tRNA L-seryl-tRNA(Sec), which will be further converted into selenocysteinyl-tRNA(Sec). This Blochmanniella pennsylvanica (strain BPEN) protein is Serine--tRNA ligase.